A 332-amino-acid polypeptide reads, in one-letter code: NADH-quinone oxidoreductase subunit H (332 aa).

9 helical membrane-spanning segments follow: residues 16–36, 87–107, 116–136, 164–184, 190–210, 231–251, 253–273, 277–297, and 312–332; these read VFFGLGALLLLVVLGFVTYAI, YVLAPIIAFTPSFMVLAALPF, IGVGLLYYIAVSGLTTIGVVT, LVMSALGVVLLAGSMNLVDIV, VWFIFAQPLAFLIFFIAAVAE, VEYSGFRWAFFMLAEYVYLFA, AALITILFLGGWHPVAFLGWI, VWFALKFCAIVYVLIWFRATF, and VLLPLSLVNIVLTAVIKSLFF.

Belongs to the complex I subunit 1 family. In terms of assembly, NDH-1 is composed of 14 different subunits. Subunits NuoA, H, J, K, L, M, N constitute the membrane sector of the complex.

The protein localises to the cell membrane. It catalyses the reaction a quinone + NADH + 5 H(+)(in) = a quinol + NAD(+) + 4 H(+)(out). Functionally, NDH-1 shuttles electrons from NADH, via FMN and iron-sulfur (Fe-S) centers, to quinones in the respiratory chain. The immediate electron acceptor for the enzyme in this species is believed to be ubiquinone. Couples the redox reaction to proton translocation (for every two electrons transferred, four hydrogen ions are translocated across the cytoplasmic membrane), and thus conserves the redox energy in a proton gradient. This subunit may bind ubiquinone. The protein is NADH-quinone oxidoreductase subunit H of Geobacillus thermodenitrificans (strain NG80-2).